A 120-amino-acid chain; its full sequence is Putative ankyrin repeat protein RBE_1215 (120 aa).

ANK repeat units follow at residues 22–52 and 59–88; these read DGGN…LTNI and FGDT…ITSV.

The sequence is that of Putative ankyrin repeat protein RBE_1215 from Rickettsia bellii (strain RML369-C).